The chain runs to 427 residues: Serine hydroxymethyltransferase (427 aa).

(6S)-5,6,7,8-tetrahydrofolate is bound by residues Leu-127 and 131-133 (GHL). At Lys-236 the chain carries N6-(pyridoxal phosphate)lysine.

The protein belongs to the SHMT family. As to quaternary structure, homodimer. The cofactor is pyridoxal 5'-phosphate.

The protein resides in the cytoplasm. The catalysed reaction is (6R)-5,10-methylene-5,6,7,8-tetrahydrofolate + glycine + H2O = (6S)-5,6,7,8-tetrahydrofolate + L-serine. The protein operates within one-carbon metabolism; tetrahydrofolate interconversion. It participates in amino-acid biosynthesis; glycine biosynthesis; glycine from L-serine: step 1/1. Catalyzes the reversible interconversion of serine and glycine with tetrahydrofolate (THF) serving as the one-carbon carrier. This reaction serves as the major source of one-carbon groups required for the biosynthesis of purines, thymidylate, methionine, and other important biomolecules. Also exhibits THF-independent aldolase activity toward beta-hydroxyamino acids, producing glycine and aldehydes, via a retro-aldol mechanism. This chain is Serine hydroxymethyltransferase, found in Paramagnetospirillum magneticum (strain ATCC 700264 / AMB-1) (Magnetospirillum magneticum).